A 901-amino-acid chain; its full sequence is Modifier of cell death (901 aa).

Disordered stretches follow at residues 147–169 and 218–245; these read AQKR…PRAA and PRKS…SPSP. The C2H2-type zinc-finger motif lies at 259–282; the sequence is FKCAECGDGFPVMDRLCDHMIKQH. Disordered regions lie at residues 494 to 528, 682 to 717, and 779 to 901; these read KKEH…DDVP, QERV…SHEE, and HKAI…WDDN. Residues 817-828 are compositionally biased toward low complexity; it reads EAAAKLIQAENE. Residues 829 to 840 are compositionally biased toward acidic residues; that stretch reads MVVEEEEVEEPP. Residues 846–866 show a composition bias toward basic and acidic residues; that stretch reads QVPKEKEVEVAEAEKLPEQVK.

Its function is as follows. Promotes programmed cell death. Its role in programmed cell death may be in conjunction with cell cycle regulatory factor efl-1 and the synthetic multivulva class B proteins dpl-1 and lin-35, and is independent of the ced-1, ced-8 and ced-9 pathways. This chain is Modifier of cell death, found in Caenorhabditis elegans.